Here is a 183-residue protein sequence, read N- to C-terminus: ATP-dependent protease subunit HslV (183 aa).

The active site involves T2. Residues G157, C160, and T163 each coordinate Na(+).

This sequence belongs to the peptidase T1B family. HslV subfamily. In terms of assembly, a double ring-shaped homohexamer of HslV is capped on each side by a ring-shaped HslU homohexamer. The assembly of the HslU/HslV complex is dependent on binding of ATP.

Its subcellular location is the cytoplasm. The catalysed reaction is ATP-dependent cleavage of peptide bonds with broad specificity.. With respect to regulation, allosterically activated by HslU binding. Its function is as follows. Protease subunit of a proteasome-like degradation complex believed to be a general protein degrading machinery. This chain is ATP-dependent protease subunit HslV, found in Vibrio campbellii (strain ATCC BAA-1116).